Here is a 438-residue protein sequence, read N- to C-terminus: Protein translocase subunit SecY (438 aa).

The chain crosses the membrane as a helical span at residues 1-43 (MKIKPILELIPEVKRPLKGVSFKEKIQWTGLVLILYFILGTID). The Extracellular segment spans residues 44-54 (IYMGGAEMPAM). The segment at residues 55-62 (FAFWQTVT) is an intramembrane region (helical). The discontinuously helical transmembrane segment at 55 to 83 (FAFWQTVTASKMGTLITLGIGPIVTAGII) threads the bilayer. The stretch at 63–74 (ASKMGTLITLGI) is an intramembrane region. The helical intramembrane region spans 75-83 (GPIVTAGII). At 84 to 104 (MQLLVGSELISLDLSKPMNRA) the chain is on the cytoplasmic side. The chain crosses the membrane as a helical span at residues 105-129 (LFQGLQKLFGIFLCFLEAVMFVGAG). Topologically, residues 130–136 (AFGVVNS) are extracellular. A helical transmembrane segment spans residues 137–161 (TLALILVLQLALGAILVIYLDEIVS). Residues 162–167 (RYGIGS) are Cytoplasmic-facing. Residues 168-186 (GIGLFIAAGVAQTIFVGAF) form a helical membrane-spanning segment. The Extracellular portion of the chain corresponds to 187–209 (GAEGYLWKFFSAMSVGSLGIAFE). The chain crosses the membrane as a helical span at residues 210–231 (YILPILSTLFVFLVVVYVESIR). Over 232 to 256 (VEIPLAHGRVKGAVGKYPIKFIYVS) the chain is Cytoplasmic. A helical membrane pass occupies residues 257-278 (NLPVILAAALFANIQLWGMFLD). Over 279-315 (RMGYPILGQYSNGTAVSGIAYYFSTPYGISNIISDPL) the chain is Extracellular. A helical transmembrane segment spans residues 316–335 (HAIFYTLMMVIFCILFGLFW). Residues 336–378 (VETSGLDAKSMAKKLGNLDMAIKGFRKSQKSIEQRLKRYIKPI) lie on the Cytoplasmic side of the membrane. Residues 379–397 (TVMGSAFVGFLAAAADFTG) form a helical membrane-spanning segment. The Extracellular portion of the chain corresponds to 398 to 400 (ALG). A helical membrane pass occupies residues 401 to 415 (GGTGVLLTVSIVYRL). The Cytoplasmic segment spans residues 416–438 (YEQLVQEQLSELHPAVAKFVGKR).

The protein belongs to the SecY/SEC61-alpha family. In terms of assembly, component of the Sec protein translocase complex. Heterotrimer consisting of alpha (SecY), beta (SecG) and gamma (SecE) subunits. The heterotrimers can form oligomers, although 1 heterotrimer is thought to be able to translocate proteins. Interacts with the ribosome. May interact with SecDF, and other proteins may be involved.

Its subcellular location is the cell membrane. In terms of biological role, the central subunit of the protein translocation channel SecYEG. Consists of two halves formed by TMs 1-5 and 6-10. These two domains form a lateral gate at the front which open onto the bilayer between TMs 2 and 7, and are clamped together by SecE at the back. The channel is closed by both a pore ring composed of hydrophobic SecY resides and a short helix (helix 2A) on the extracellular side of the membrane which forms a plug. The plug probably moves laterally to allow the channel to open. The ring and the pore may move independently. The protein is Protein translocase subunit SecY of Methanococcus vannielii.